We begin with the raw amino-acid sequence, 803 residues long: Volume-regulated anion channel subunit LRRC8B (803 aa).

Residues 1 to 25 (MITLTELKCLADAQSSYHILKPWWD) are Cytoplasmic-facing. A helical transmembrane segment spans residues 26–46 (VFWYYITLIMLLVAVLAGALQ). The Extracellular segment spans residues 47–119 (LTQSRVLCCL…YEKQLHWFAK (73 aa)). 2 cysteine pairs are disulfide-bonded: Cys-55/Cys-304 and Cys-109/Cys-289. Asn-78 carries an N-linked (GlcNAc...) asparagine glycan. A helical transmembrane segment spans residues 120–140 (FFPYLVLLHTLIFAACSNFWL). At 141-261 (HYPSTSSRLE…DIIYRVYLKQ (121 aa)) the chain is on the cytoplasmic side. Ser-186 and Ser-196 each carry phosphoserine. Residues 262-282 (IIVKVILFVLIITYVPYFLSY) traverse the membrane as a helical segment. The Extracellular portion of the chain corresponds to 283–307 (ITLEIDCSIDVQAFTGYKRYQCVYS). The chain crosses the membrane as a helical span at residues 308 to 328 (LAEIFKVLASFYVILVMLYGL). Residues 329 to 803 (TSSYSLWWML…ERLQTCLDKC (475 aa)) lie on the Cytoplasmic side of the membrane. 15 LRR repeats span residues 415–439 (VKNSQDKVELHLFMLNGLPDNVFEL), 440–462 (TEMEVLSLELIPEVKLPAAVAQL), 464–486 (NLRELHVYHSSLVVDHPALAFLE), 488–509 (NLRILRLKFTEMGKIPRWVFHL), 511–532 (NLKELYLSGCVLPEQLSSLHLE), 539–559 (NLRTLYLKSSLSRIPQVVTDL), 562–582 (SLQKLSLDNEGSKLVVLNNLK), 586–607 (NLKSLELLSCDLERIPHSIFSL), 609–630 (NLHELDLKENNLKTVEEIISFQ), 634–655 (SLSCLKLWHNNIAYIPAQIGAL), 657–678 (NLEQLFLGHNNIESLPLQLFLC), 680–701 (KLHYLDLSYNHLTFIPEEIQYL), 703–724 (NLQYFAVTNNNIEMLPDGLFQC), 726–747 (KLQCLLLGRNSLTDLSPLVGEL), and 749–771 (NLTHLELTGNYLETLPVELEGCQ).

This sequence belongs to the LRRC8 family. In terms of assembly, heterohexamer; oligomerizes with other LRRC8 proteins (LRRC8A, LRRC8C, LRRC8D and/or LRRC8E) to form a heterohexamer. In vivo, the subunit composition may depend primarily on expression levels, and heterooligomeric channels containing various proportions of the different LRRC8 proteins may coexist.

It localises to the cell membrane. The protein resides in the endoplasmic reticulum membrane. It carries out the reaction chloride(in) = chloride(out). The enzyme catalyses iodide(out) = iodide(in). It catalyses the reaction taurine(out) = taurine(in). Its function is as follows. Non-essential component of the volume-regulated anion channel (VRAC, also named VSOAC channel), an anion channel required to maintain a constant cell volume in response to extracellular or intracellular osmotic changes. The VRAC channel conducts iodide better than chloride and can also conduct organic osmolytes like taurine. Channel activity requires LRRC8A plus at least one other family member (LRRC8B, LRRC8C, LRRC8D or LRRC8E); channel characteristics depend on the precise subunit composition. This chain is Volume-regulated anion channel subunit LRRC8B, found in Mus musculus (Mouse).